A 216-amino-acid chain; its full sequence is MSEAYFRVESGALGPEENFLSLDDILMSHEKLSVRTEIPMPRLGAFFLDRSGGAETDNAIPEGTKLELPLWLAKGLFDNKRRILSVELPKIYQEGWRTVFSADANVVDLHKMGPHFYGFGSQLLHFDSPENADISHSLLQTFVGRFRRIMDSSQNAYNEDTSALVARLDEMERGLFQTGQKGLNDFQCWEKGQASQLTASNLVQNYAKRKFTDMED.

A not essential for folding and stability of GINS complex, but may regulate accessibility to the central complex pore region spans residues 1–16 (MSEAYFRVESGALGPE).

Belongs to the GINS3/PSF3 family. As to quaternary structure, component of the GINS complex which is a heterotetramer of GINS1, GINS2, GINS3 and GINS4. Forms a stable subcomplex with GINS2. GINS complex interacts with DNA primase in vitro. Component of the CMG helicase complex, a hexameric ring of related MCM2-7 subunits stabilized by CDC45 and the tetrameric GINS complex.

It localises to the nucleus. The protein localises to the chromosome. In terms of biological role, required for correct functioning of the GINS complex, a complex that plays an essential role in the initiation of DNA replication, and progression of DNA replication forks. GINS complex is a core component of CDC45-MCM-GINS (CMG) helicase, the molecular machine that unwinds template DNA during replication, and around which the replisome is built. This chain is DNA replication complex GINS protein PSF3 (GINS3), found in Bos taurus (Bovine).